Reading from the N-terminus, the 91-residue chain is Probable Fe(2+)-trafficking protein (91 aa).

This sequence belongs to the Fe(2+)-trafficking protein family.

In terms of biological role, could be a mediator in iron transactions between iron acquisition and iron-requiring processes, such as synthesis and/or repair of Fe-S clusters in biosynthetic enzymes. The sequence is that of Probable Fe(2+)-trafficking protein from Thiobacillus denitrificans (strain ATCC 25259 / T1).